We begin with the raw amino-acid sequence, 167 residues long: Small ribosomal subunit protein uS9 (167 aa).

Disordered stretches follow at residues 1–45 and 137–167; these read MSEY…GGAT and KAGF…FSKR. A compositionally biased stretch (acidic residues) spans 9-19; sequence DTVEDITESDE. Polar residues predominate over residues 20 to 36; it reads FTGTYTSESSTPATGGN. Basic and acidic residues predominate over residues 143-152; that stretch reads RDPRATERKK. The segment covering 153–167 has biased composition (basic residues); that stretch reads AGLKKARKAPQFSKR.

This sequence belongs to the universal ribosomal protein uS9 family.

This is Small ribosomal subunit protein uS9 from Kineococcus radiotolerans (strain ATCC BAA-149 / DSM 14245 / SRS30216).